A 360-amino-acid chain; its full sequence is DNA replication and repair protein RecF (360 aa).

Position 30–37 (30–37 (GQNGSGKT)) interacts with ATP.

It belongs to the RecF family.

The protein localises to the cytoplasm. Its function is as follows. The RecF protein is involved in DNA metabolism; it is required for DNA replication and normal SOS inducibility. RecF binds preferentially to single-stranded, linear DNA. It also seems to bind ATP. The protein is DNA replication and repair protein RecF of Shewanella baltica (strain OS155 / ATCC BAA-1091).